We begin with the raw amino-acid sequence, 429 residues long: MDRIHITGGAPLQGEIPISGAKNAALPLMIASLLTGETVELANVPRLADIASLLRILGNHGVDHMVVGKRPGQTSETGQTIRLTASNVIDTTAPYELVSTMRASFWVVAPLLARFGEAKVSMPGGCAIGTRPVDLLLMALERLGASIEIDGGYVVARTRNGLRGAEIVFPKVTVGGTHVALMAAALAQGTSVIENAAREPEVVDLAACLTKMGARIEGVGTPRIVVEGVSRLGGARHEVLPDRIETGTYAMAVAMTGGDVILRDTRAELLHSALDVLATTGTEVTALPDGIRVRRNGAGVAAVDVTTDPFPGFPTDLQAQFMALMTRARGQSRIRETIFENRFMHVQELARLGARIRLDGDLAVVDGVERLKGAPVMATDLRASVSLVIAGLAAEGETTINRVYHLDRGFEALEAKLGRCGAQIRRERA.

Residue 22–23 (KN) participates in phosphoenolpyruvate binding. R102 provides a ligand contact to UDP-N-acetyl-alpha-D-glucosamine. The active-site Proton donor is the C126. C126 is subject to 2-(S-cysteinyl)pyruvic acid O-phosphothioketal. Residues 131–135 (RPVDL), D316, and I338 contribute to the UDP-N-acetyl-alpha-D-glucosamine site.

This sequence belongs to the EPSP synthase family. MurA subfamily.

The protein resides in the cytoplasm. It carries out the reaction phosphoenolpyruvate + UDP-N-acetyl-alpha-D-glucosamine = UDP-N-acetyl-3-O-(1-carboxyvinyl)-alpha-D-glucosamine + phosphate. The protein operates within cell wall biogenesis; peptidoglycan biosynthesis. In terms of biological role, cell wall formation. Adds enolpyruvyl to UDP-N-acetylglucosamine. This is UDP-N-acetylglucosamine 1-carboxyvinyltransferase from Methylobacterium sp. (strain 4-46).